Consider the following 406-residue polypeptide: Tryptophan 2,3-dioxygenase (406 aa).

A Phosphoserine modification is found at S19. Residues 72-76 (FIITH) and R144 each bind substrate. H328 contributes to the heme binding site. Residue T342 coordinates substrate.

The protein belongs to the tryptophan 2,3-dioxygenase family. Homotetramer. Dimer of dimers. It depends on heme as a cofactor. As to expression, liver.

It carries out the reaction L-tryptophan + O2 = N-formyl-L-kynurenine. It participates in amino-acid degradation; L-tryptophan degradation via kynurenine pathway; L-kynurenine from L-tryptophan: step 1/2. Functionally, heme-dependent dioxygenase that catalyzes the oxidative cleavage of the L-tryptophan (L-Trp) pyrrole ring and converts L-tryptophan to N-formyl-L-kynurenine. Catalyzes the oxidative cleavage of the indole moiety. The chain is Tryptophan 2,3-dioxygenase from Rattus norvegicus (Rat).